Reading from the N-terminus, the 227-residue chain is UPF0758 protein CPE2144 (227 aa).

Positions 105 to 227 constitute an MPN domain; that stretch reads KISKPSDVAK…FISLKEKDIL (123 aa). Zn(2+)-binding residues include H176, H178, and D189. The JAMM motif signature appears at 176–189; that stretch reads HNHPSGDPTPSRDD.

It belongs to the UPF0758 family.

The chain is UPF0758 protein CPE2144 from Clostridium perfringens (strain 13 / Type A).